The sequence spans 338 residues: Large ribosomal subunit protein uL3 (338 aa).

Disordered regions lie at residues 230–256 and 315–338; these read HRKG…RPGQ and PARP…SQQP.

The protein belongs to the universal ribosomal protein uL3 family. Part of the 50S ribosomal subunit. Forms a cluster with proteins L14 and L24e.

In terms of biological role, one of the primary rRNA binding proteins, it binds directly near the 3'-end of the 23S rRNA, where it nucleates assembly of the 50S subunit. The protein is Large ribosomal subunit protein uL3 of Pyrobaculum arsenaticum (strain DSM 13514 / JCM 11321 / PZ6).